Consider the following 358-residue polypeptide: Peptide chain release factor 1 (358 aa).

At Gln-235 the chain carries N5-methylglutamine.

It belongs to the prokaryotic/mitochondrial release factor family. Post-translationally, methylated by PrmC. Methylation increases the termination efficiency of RF1.

It is found in the cytoplasm. In terms of biological role, peptide chain release factor 1 directs the termination of translation in response to the peptide chain termination codons UAG and UAA. This is Peptide chain release factor 1 from Nitrosospira multiformis (strain ATCC 25196 / NCIMB 11849 / C 71).